We begin with the raw amino-acid sequence, 177 residues long: MLDIIILILLLMGTLLGLKRGFILQFIRLTSFILSIAFAALFYKNVAPHLHWIPAPDFSAGQPALSFFTGNLEAAYYNAIAFIVLFIIAKILLRIIGSFLSIVAGIPVIKQINQMLGAVLGFLEVYLFTFVLLYVASVLPVDALQQMMGQSSLANVIINHTPYLSGLLQELWTQYGA.

The next 4 membrane-spanning stretches (helical) occupy residues Ile-4 to Leu-24, Ile-33 to Ile-53, Ile-80 to Leu-100, and Met-115 to Val-135.

It localises to the cell membrane. This is an uncharacterized protein from Bacillus subtilis (strain 168).